Consider the following 638-residue polypeptide: Chaperone protein DnaK (638 aa).

Residue Thr200 is modified to Phosphothreonine; by autocatalysis. The disordered stretch occupies residues 599-623 (LHMAATAEQQSASTGAGAGSSAKVD). A compositionally biased stretch (low complexity) spans 609-620 (SASTGAGAGSSA).

It belongs to the heat shock protein 70 family.

Its function is as follows. Acts as a chaperone. This chain is Chaperone protein DnaK, found in Xylella fastidiosa (strain M12).